The chain runs to 672 residues: MTELLKISLPDGSVREMEAGATPADVAAAIGPGLAKAALAAKVDGEVRDLNRPFEGDAELALITSRDEEEALELARHDYAHVLAEAVQALWPGTQITFGPATDDGFYYDVKAPDSRDPFGMDDLPAIEEKMREIIKADKPLVREVWSREQLIEKWEAEGEVFKAEWAKELPEDEELTVYWSGEPGGEDSWLDMCRGPHLASTGKLDPQAFKLMRVAGAYWRGDQRNPQLTRIYGTGWLNKKQLNAHLHRLEEAAKRDHRKLGREMDLFHLQEEAHGSVFWHPQGYKIWRELEAYMRRKMDGAGYREIKTPQVMDARQWEQSGHWGKYRENMFVIPDEIPNTEDEGELVSKDADWMALKPMNCPAHVLVFKQGITSYRDLPIRLGEMGCCHRNEPHGALHGLMRVRQFTQDDAHIFCTEDQVVEEVRAFCKLADEVYRDFGFDYDVKLALRPEQRFGSEEDWDKAEQELRDAVAEAGMANDDYGWEELPGEGAFYAPKLEWHLTDAIGRTWQVGTIQGDRVLPERLDATYVGEDGGKHRPVMLHRAIFGSYERFIGILIEHFAGRLPVWLAPTQAVVATIVSDADGYAKEAVAKLEAAGIRVDGDLRNEKINFKVREHSLAKVPHLLVVGKREAEEGTVAVRTLGEKEQQVMSLDDAIAMLKDAATPPDLRDG.

The region spanning 1–64 is the TGS domain; it reads MTELLKISLP…EGDAELALIT (64 aa). The segment at 257–566 is catalytic; sequence DHRKLGREMD…LIEHFAGRLP (310 aa). Zn(2+) is bound by residues C362, H413, and H543.

The protein belongs to the class-II aminoacyl-tRNA synthetase family. In terms of assembly, homodimer. The cofactor is Zn(2+).

The protein resides in the cytoplasm. It catalyses the reaction tRNA(Thr) + L-threonine + ATP = L-threonyl-tRNA(Thr) + AMP + diphosphate + H(+). Functionally, catalyzes the attachment of threonine to tRNA(Thr) in a two-step reaction: L-threonine is first activated by ATP to form Thr-AMP and then transferred to the acceptor end of tRNA(Thr). Also edits incorrectly charged L-seryl-tRNA(Thr). In Erythrobacter litoralis (strain HTCC2594), this protein is Threonine--tRNA ligase.